The chain runs to 422 residues: Tyrosine--tRNA ligase (422 aa).

Tyr-35 is a binding site for L-tyrosine. The 'HIGH' region motif lies at 40–49 (PTAPSLHLGN). Residues Tyr-170 and Gln-174 each contribute to the L-tyrosine site. Residues 231 to 235 (KFGKT) carry the 'KMSKS' region motif. ATP is bound at residue Lys-234. The region spanning 353–419 (APVVDLFAEV…GKKNLAAVEV (67 aa)) is the S4 RNA-binding domain.

It belongs to the class-I aminoacyl-tRNA synthetase family. TyrS type 1 subfamily. As to quaternary structure, homodimer.

The protein localises to the cytoplasm. It carries out the reaction tRNA(Tyr) + L-tyrosine + ATP = L-tyrosyl-tRNA(Tyr) + AMP + diphosphate + H(+). In terms of biological role, catalyzes the attachment of tyrosine to tRNA(Tyr) in a two-step reaction: tyrosine is first activated by ATP to form Tyr-AMP and then transferred to the acceptor end of tRNA(Tyr). This is Tyrosine--tRNA ligase from Streptomyces avermitilis (strain ATCC 31267 / DSM 46492 / JCM 5070 / NBRC 14893 / NCIMB 12804 / NRRL 8165 / MA-4680).